The chain runs to 246 residues: Caffeoyl-CoA O-methyltransferase 1 (246 aa).

K21 serves as a coordination point for substrate. S-adenosyl-L-methionine contacts are provided by residues T63, E85, 87 to 88, S93, D111, and A140; that span reads GV. D162 provides a ligand contact to substrate. D162 is an a divalent metal cation binding site. S-adenosyl-L-methionine is bound at residue D164. 2 residues coordinate a divalent metal cation: D188 and N189. Position 193 (N193) interacts with substrate.

Belongs to the class I-like SAM-binding methyltransferase superfamily. Cation-dependent O-methyltransferase family. CCoAMT subfamily. The cofactor is a divalent metal cation.

The enzyme catalyses (E)-caffeoyl-CoA + S-adenosyl-L-methionine = (E)-feruloyl-CoA + S-adenosyl-L-homocysteine + H(+). It participates in aromatic compound metabolism; phenylpropanoid biosynthesis. In terms of biological role, methylates caffeoyl-CoA to feruloyl-CoA and 5-hydroxyferuloyl-CoA to sinapoyl-CoA. Plays a role in the synthesis of feruloylated polysaccharides. Involved in the reinforcement of the plant cell wall. Also involved in the responding to wounding or pathogen challenge by the increased formation of cell wall-bound ferulic acid polymers. This is Caffeoyl-CoA O-methyltransferase 1 (CCOMT) from Eucalyptus globulus (Tasmanian blue gum).